The chain runs to 493 residues: Vinyl phenol reductase (493 aa).

Positions 19, 38, 46, 50, 52, 156, 224, 448, and 467 each coordinate FAD.

It belongs to the FAD-dependent oxidoreductase 2 family. FRD/SDH subfamily. FAD serves as cofactor.

The catalysed reaction is 4-vinylphenol + NADH + H(+) = 4-ethylphenol + NAD(+). It catalyses the reaction 3,4-dihydroxystyrene + NADH + H(+) = 4-ethylcatechol + NAD(+). It carries out the reaction 2-methoxy-4-vinylphenol + NADH + H(+) = 4-ethyl-2-methoxyphenol + NAD(+). Involved in the production of ethylphenols during the degradation of hydroxycinnamic acids. Catalyzes the reduction of vinylphenols (4-vinylphenol (4-hydroxystyrene), 4-vinylcatechol (3,4-dihydroxystyrene), and 4-vinylguaiacol (2-methoxy-4-vinylphenol)) to their corresponding ethylphenols (4-ethylphenol, 4-ethylcatechol, and 4-ethylguaiacol, respectively) in the presence of NADH. These compounds are considered the most important flavor components of fermented soy sauce, and, on the other hand, are considered off flavor and responsible for sensorial wine and cider alteration. The 4-ethylphenol produced by the gut bacteria L.plantarum strain WCFS1 can get subsequent sulfation to 4-ethylphenyl sulfate (4EPS) by host sulfotransferase (SULT1A1); 4EPS can enter the brain and seems to alter brain activity. Therefore, this enzyme likely plays a role in gut microbiota-host metabolic interactions. This chain is Vinyl phenol reductase, found in Lactiplantibacillus plantarum (strain ATCC BAA-793 / NCIMB 8826 / WCFS1) (Lactobacillus plantarum).